Here is an 875-residue protein sequence, read N- to C-terminus: DNA mismatch repair protein MutS (875 aa).

626–633 is an ATP binding site; it reads GPNMAGKS. A disordered region spans residues 830–855; sequence RAAPPPPAPAAPKTSPVEERLREIQP. Residues 845 to 855 show a composition bias toward basic and acidic residues; it reads PVEERLREIQP.

Belongs to the DNA mismatch repair MutS family.

Its function is as follows. This protein is involved in the repair of mismatches in DNA. It is possible that it carries out the mismatch recognition step. This protein has a weak ATPase activity. The protein is DNA mismatch repair protein MutS of Cereibacter sphaeroides (strain ATCC 17023 / DSM 158 / JCM 6121 / CCUG 31486 / LMG 2827 / NBRC 12203 / NCIMB 8253 / ATH 2.4.1.) (Rhodobacter sphaeroides).